The primary structure comprises 301 residues: GTPase Era (301 aa).

One can recognise an Era-type G domain in the interval 11-180; that stretch reads RSGIITLVGR…KDVFFENCLN (170 aa). The tract at residues 19-26 is G1; that stretch reads GRPNVGKS. 19–26 contacts GTP; it reads GRPNVGKS. The tract at residues 45-49 is G2; the sequence is QTTRR. Positions 66–69 are G3; sequence DTPG. Residues 66 to 70 and 129 to 132 each bind GTP; these read DTPGI and TKID. The G4 stretch occupies residues 129-132; sequence TKID. The segment at 159–161 is G5; sequence VSA. The KH type-2 domain maps to 210 to 286; it reads LEQEIPHSLL…YLRLIVKVVK (77 aa).

This sequence belongs to the TRAFAC class TrmE-Era-EngA-EngB-Septin-like GTPase superfamily. Era GTPase family. Monomer.

The protein resides in the cytoplasm. It is found in the cell membrane. An essential GTPase that binds both GDP and GTP, with rapid nucleotide exchange. Plays a role in 16S rRNA processing and 30S ribosomal subunit biogenesis and possibly also in cell cycle regulation and energy metabolism. This Tropheryma whipplei (strain TW08/27) (Whipple's bacillus) protein is GTPase Era.